The primary structure comprises 98 residues: Lactococcin-A immunity protein (98 aa).

Functionally, imparts immunity to lactococcin-A to naturally sensitive host strains. This Lactococcus lactis subsp. cremoris (Streptococcus cremoris) protein is Lactococcin-A immunity protein (lciA).